The chain runs to 235 residues: Peptidase E (235 aa).

Active-site charge relay system residues include Ser-122, Asp-137, and His-159.

It belongs to the peptidase S51 family.

It is found in the cytoplasm. The catalysed reaction is Dipeptidase E catalyzes the hydrolysis of dipeptides Asp-|-Xaa. It does not act on peptides with N-terminal Glu, Asn or Gln, nor does it cleave isoaspartyl peptides.. Hydrolyzes dipeptides containing N-terminal aspartate residues. May play a role in allowing the cell to use peptide aspartate to spare carbon otherwise required for the synthesis of the aspartate family of amino acids. The polypeptide is Peptidase E (Shewanella denitrificans (strain OS217 / ATCC BAA-1090 / DSM 15013)).